A 284-amino-acid chain; its full sequence is AA14 family lytic polysaccharide monooxygenase B (284 aa).

Positions 1–20 are cleaved as a signal peptide; it reads MGYLSKLVTSVVFAIPLASA. N-linked (GlcNAc...) asparagine glycans are attached at residues N42, N96, N142, and N183. C197 and C218 are disulfide-bonded.

It belongs to the polysaccharide monooxygenase AA14 family. Cu(2+) serves as cofactor.

The protein localises to the secreted. In terms of biological role, lytic polysaccharide monooxygenase (LPMO) that plays decomposes some specific network structures formed between cellulose and hemicellulose in the plant cell walls. Catalysis by LPMOs requires the reduction of the active-site copper from Cu(II) to Cu(I) by a reducing agent and H(2)O(2) or O(2) as a cosubstrate. This is AA14 family lytic polysaccharide monooxygenase B from Talaromyces rugulosus (Penicillium rugulosum).